We begin with the raw amino-acid sequence, 181 residues long: MSSLLQGVNLYLIGMMGAGKTTVGHLLAQELGYGFLDTDNVIAQAAKKSINEIFAEAGEAGFRQIESDVLAQVCSYTKLTVATGGGIVLRRENWSYLHHGLIVWLDVSVDILYARLAADTTRPLLQDDDPKGKLRSLLEQRTPLYSQADLRICVNAEETPEQIANKIMQVIPSVLKQTTAN.

17–22 contacts ATP; sequence GAGKTT. Mg(2+) is bound at residue threonine 21. Residues aspartate 39, arginine 63, and glycine 85 each contribute to the substrate site. Arginine 122 contacts ATP. Arginine 141 is a binding site for substrate.

This sequence belongs to the shikimate kinase family. Monomer. It depends on Mg(2+) as a cofactor.

The protein localises to the cytoplasm. The enzyme catalyses shikimate + ATP = 3-phosphoshikimate + ADP + H(+). The protein operates within metabolic intermediate biosynthesis; chorismate biosynthesis; chorismate from D-erythrose 4-phosphate and phosphoenolpyruvate: step 5/7. Catalyzes the specific phosphorylation of the 3-hydroxyl group of shikimic acid using ATP as a cosubstrate. This is Shikimate kinase from Trichormus variabilis (strain ATCC 29413 / PCC 7937) (Anabaena variabilis).